Consider the following 357-residue polypeptide: 3-isopropylmalate dehydrogenase (357 aa).

The substrate site is built by Arg97, Arg107, Arg135, and Asp224. Residues Asp224, Asp248, and Asp252 each coordinate Mg(2+). 282 to 294 (GSAPDIAGQDKAN) lines the NAD(+) pocket.

It belongs to the isocitrate and isopropylmalate dehydrogenases family. LeuB type 1 subfamily. Homodimer. Mg(2+) serves as cofactor. Requires Mn(2+) as cofactor.

The protein resides in the cytoplasm. The enzyme catalyses (2R,3S)-3-isopropylmalate + NAD(+) = 4-methyl-2-oxopentanoate + CO2 + NADH. The protein operates within amino-acid biosynthesis; L-leucine biosynthesis; L-leucine from 3-methyl-2-oxobutanoate: step 3/4. Catalyzes the oxidation of 3-carboxy-2-hydroxy-4-methylpentanoate (3-isopropylmalate) to 3-carboxy-4-methyl-2-oxopentanoate. The product decarboxylates to 4-methyl-2 oxopentanoate. In Synechococcus sp. (strain CC9902), this protein is 3-isopropylmalate dehydrogenase.